Reading from the N-terminus, the 364-residue chain is Salivary endonuclease (364 aa).

An N-terminal signal peptide occupies residues 1-24 (MSSFFLSISPLVLALFHVVVQVCS). Asn285 is a glycosylation site (N-linked (GlcNAc...) asparagine).

It belongs to the DNA/RNA non-specific endonuclease family. The cofactor is Mg(2+). As to expression, saliva (at protein level). Female salivary gland.

It localises to the secreted. Hydrolyzes double-stranded DNA with no sequence specificity. Does not cleave ssDNA and RNA. May facilitate blood meal intake by lowering the local viscosity created by the release of host DNA. In Culex quinquefasciatus (Southern house mosquito), this protein is Salivary endonuclease.